The following is a 501-amino-acid chain: Microtubule-associated protein mmb1 (501 aa).

Polar residues-rich tracts occupy residues 61 to 95 (NISS…TNNV), 103 to 122 (RNPS…SNNA), and 132 to 168 (HENS…SSNA). Disordered stretches follow at residues 61–274 (NISS…VKVN), 328–381 (VSRN…TTGN), and 478–501 (NQTS…NRMI). The segment covering 234–252 (SSVVRPPTRTSTTRPLSRV) has biased composition (low complexity). Composition is skewed to polar residues over residues 253 to 274 (NVTN…VKVN), 367 to 381 (SRIQ…TTGN), and 478 to 495 (NQTS…SSPL).

It is found in the cytoplasm. Its subcellular location is the cytoskeleton. Functionally, involved in the cell polarity process and in regulation of microtubule growth. Has a role in meiosis. Involved in microtubule dynamics. Binds to mitochondria and microtubules, attaching the tubular mitochondria to the microtubule lattice at multiple discrete interaction sites. The polypeptide is Microtubule-associated protein mmb1 (Schizosaccharomyces pombe (strain 972 / ATCC 24843) (Fission yeast)).